A 66-amino-acid polypeptide reads, in one-letter code: Panusin (66 aa).

The N-terminal stretch at 1–22 (MKTKAVLMLMLLVLVAATLVQG) is a signal peptide. Residues 23-26 (EPEP) constitute a propeptide that is removed on maturation. Disulfide bonds link Cys-32–Cys-54, Cys-39–Cys-61, and Cys-44–Cys-60. Tyr-65 bears the Tyrosine amide mark.

As to quaternary structure, forms dimers and higher-order oligomers. Post-translationally, contains 3 disulfide bonds.

In terms of biological role, antimicrobial peptide. Has antibacterial activity against Gram-positive bacteria S.aureus ATCC 29737 and B.subtilis ATCC 6633 as well as against Gram-negative bacteria E.coli ATCC 10536 and K.pneumoniae ATCC 10031. This chain is Panusin, found in Panulirus argus (Caribbean spiny lobster).